The following is a 158-amino-acid chain: Protein Smg homolog (158 aa).

The protein belongs to the Smg family.

The sequence is that of Protein Smg homolog from Coxiella burnetii (strain RSA 331 / Henzerling II).